Consider the following 154-residue polypeptide: 6,7-dimethyl-8-ribityllumazine synthase (154 aa).

5-amino-6-(D-ribitylamino)uracil-binding positions include F26, 60–62 (ALE), and 84–86 (CII). 89-90 (ET) is a (2S)-2-hydroxy-3-oxobutyl phosphate binding site. H92 acts as the Proton donor in catalysis. N117 provides a ligand contact to 5-amino-6-(D-ribitylamino)uracil. R131 contributes to the (2S)-2-hydroxy-3-oxobutyl phosphate binding site.

This sequence belongs to the DMRL synthase family.

The enzyme catalyses (2S)-2-hydroxy-3-oxobutyl phosphate + 5-amino-6-(D-ribitylamino)uracil = 6,7-dimethyl-8-(1-D-ribityl)lumazine + phosphate + 2 H2O + H(+). Its pathway is cofactor biosynthesis; riboflavin biosynthesis; riboflavin from 2-hydroxy-3-oxobutyl phosphate and 5-amino-6-(D-ribitylamino)uracil: step 1/2. Functionally, catalyzes the formation of 6,7-dimethyl-8-ribityllumazine by condensation of 5-amino-6-(D-ribitylamino)uracil with 3,4-dihydroxy-2-butanone 4-phosphate. This is the penultimate step in the biosynthesis of riboflavin. The protein is 6,7-dimethyl-8-ribityllumazine synthase of Acidovorax ebreus (strain TPSY) (Diaphorobacter sp. (strain TPSY)).